A 957-amino-acid chain; its full sequence is Glycine dehydrogenase (decarboxylating) (957 aa).

An N6-(pyridoxal phosphate)lysine modification is found at K708.

The protein belongs to the GcvP family. In terms of assembly, the glycine cleavage system is composed of four proteins: P, T, L and H. The cofactor is pyridoxal 5'-phosphate.

The catalysed reaction is N(6)-[(R)-lipoyl]-L-lysyl-[glycine-cleavage complex H protein] + glycine + H(+) = N(6)-[(R)-S(8)-aminomethyldihydrolipoyl]-L-lysyl-[glycine-cleavage complex H protein] + CO2. Its function is as follows. The glycine cleavage system catalyzes the degradation of glycine. The P protein binds the alpha-amino group of glycine through its pyridoxal phosphate cofactor; CO(2) is released and the remaining methylamine moiety is then transferred to the lipoamide cofactor of the H protein. In Escherichia coli O8 (strain IAI1), this protein is Glycine dehydrogenase (decarboxylating).